Here is a 380-residue protein sequence, read N- to C-terminus: Mitogen-activated protein kinase mpkC (380 aa).

In terms of domain architecture, Protein kinase spans 20–300; sequence YVNLQPIGMG…AQDALRHPYL (281 aa). Residues 26 to 34 and K49 contribute to the ATP site; that span reads IGMGSFGLV. The active-site Proton acceptor is the D141. Position 171 is a phosphothreonine (T171). Positions 171 to 173 match the TXY motif; it reads TGY. Residue Y173 is modified to Phosphotyrosine.

The protein belongs to the protein kinase superfamily. Ser/Thr protein kinase family. MAP kinase subfamily. HOG1 sub-subfamily. The cofactor is Mg(2+). Post-translationally, dually phosphorylated on Thr-171 and Tyr-173, which activates the enzyme.

The catalysed reaction is L-seryl-[protein] + ATP = O-phospho-L-seryl-[protein] + ADP + H(+). The enzyme catalyses L-threonyl-[protein] + ATP = O-phospho-L-threonyl-[protein] + ADP + H(+). Its activity is regulated as follows. Activated by tyrosine and threonine phosphorylation. Its function is as follows. Mitogen-activated protein kinase required for growth on media where sorbitol or mannitol is the sole carbon source. This is Mitogen-activated protein kinase mpkC (mpkC) from Aspergillus clavatus (strain ATCC 1007 / CBS 513.65 / DSM 816 / NCTC 3887 / NRRL 1 / QM 1276 / 107).